Consider the following 300-residue polypeptide: Porphobilinogen deaminase (300 aa).

At Cys239 the chain carries S-(dipyrrolylmethanemethyl)cysteine.

Belongs to the HMBS family. As to quaternary structure, monomer. The cofactor is dipyrromethane.

The enzyme catalyses 4 porphobilinogen + H2O = hydroxymethylbilane + 4 NH4(+). Its pathway is porphyrin-containing compound metabolism; protoporphyrin-IX biosynthesis; coproporphyrinogen-III from 5-aminolevulinate: step 2/4. In terms of biological role, tetrapolymerization of the monopyrrole PBG into the hydroxymethylbilane pre-uroporphyrinogen in several discrete steps. In Francisella tularensis subsp. novicida (strain U112), this protein is Porphobilinogen deaminase.